Reading from the N-terminus, the 140-residue chain is Nucleoside diphosphate kinase (140 aa).

ATP contacts are provided by lysine 11, phenylalanine 59, arginine 87, threonine 93, arginine 104, and asparagine 114. The Pros-phosphohistidine intermediate role is filled by histidine 117.

This sequence belongs to the NDK family. Homotetramer. Requires Mg(2+) as cofactor.

It localises to the cytoplasm. It catalyses the reaction a 2'-deoxyribonucleoside 5'-diphosphate + ATP = a 2'-deoxyribonucleoside 5'-triphosphate + ADP. The enzyme catalyses a ribonucleoside 5'-diphosphate + ATP = a ribonucleoside 5'-triphosphate + ADP. In terms of biological role, major role in the synthesis of nucleoside triphosphates other than ATP. The ATP gamma phosphate is transferred to the NDP beta phosphate via a ping-pong mechanism, using a phosphorylated active-site intermediate. This Bartonella henselae (strain ATCC 49882 / DSM 28221 / CCUG 30454 / Houston 1) (Rochalimaea henselae) protein is Nucleoside diphosphate kinase.